We begin with the raw amino-acid sequence, 710 residues long: Pentatricopeptide repeat-containing protein At5g39680 (710 aa).

At Ser-2 the chain carries N-acetylserine. PPR repeat units follow at residues 35 to 64 (NELL…NQSS), 68 to 98 (DAYQ…MPER), 99 to 133 (NVVS…GESR), 135 to 169 (NEFV…GLIS), 170 to 200 (HEFV…LPYC), 201 to 235 (DLSV…DFVW), 236 to 270 (NNLT…GFNA), 271 to 301 (EVEA…THAQ), 302 to 336 (NIFL…EVPP), 337 to 371 (NEYT…GYRN), 372 to 402 (HVMV…MTFR), 403 to 437 (DIVT…GEIP), 438 to 473 (NRIT…DVQP), and 474 to 504 (DIQH…APIE). The type E motif stretch occupies residues 509–584 (AWRTLLNACY…EPGVSWIGIR (76 aa)). The tract at residues 585–615 (NQTHVFLAEDNQHPEITLIYAKVKEVMSKIK) is type E(+) motif. Residues 616–710 (PLGYSPDVAG…DGQCSCCDYW (95 aa)) are type DYW motif.

It belongs to the PPR family. PCMP-H subfamily.

The protein is Pentatricopeptide repeat-containing protein At5g39680 (EMB2744) of Arabidopsis thaliana (Mouse-ear cress).